The primary structure comprises 1042 residues: Isoleucine--tRNA ligase (1042 aa).

The short motif at 59-69 is the 'HIGH' region element; it reads PFANGLPHYGH. Positions 619–623 match the 'KMSKS' region motif; sequence KMSKS. K622 is a binding site for ATP.

It belongs to the class-I aminoacyl-tRNA synthetase family. IleS type 2 subfamily. Monomer. It depends on Zn(2+) as a cofactor.

It localises to the cytoplasm. It carries out the reaction tRNA(Ile) + L-isoleucine + ATP = L-isoleucyl-tRNA(Ile) + AMP + diphosphate. Catalyzes the attachment of isoleucine to tRNA(Ile). As IleRS can inadvertently accommodate and process structurally similar amino acids such as valine, to avoid such errors it has two additional distinct tRNA(Ile)-dependent editing activities. One activity is designated as 'pretransfer' editing and involves the hydrolysis of activated Val-AMP. The other activity is designated 'posttransfer' editing and involves deacylation of mischarged Val-tRNA(Ile). The chain is Isoleucine--tRNA ligase from Nocardia farcinica (strain IFM 10152).